The chain runs to 1008 residues: SKI family transcriptional corepressor 2 (1008 aa).

Disordered stretches follow at residues 280-315 (HLLG…DDDD) and 514-927 (EPGG…KKDV). 2 stretches are compositionally biased toward pro residues: residues 284-294 (APPPPPPPPPL) and 525-534 (APPPGQPPPV). 2 stretches are compositionally biased toward low complexity: residues 535 to 544 (VANGPGSGPP) and 578 to 595 (GVTS…SVGT). Basic and acidic residues predominate over residues 626-635 (GGKDDAESLA). The span at 649-666 (PAHHHHHHHHPHHHHHHP) shows a compositional bias: basic residues. Over residues 691-703 (APPPPPPPPPLAP) the composition is skewed to pro residues. Composition is skewed to acidic residues over residues 724–739 (DSSE…QEVD) and 748–766 (GEEE…EDEE). Positions 787 to 797 (LSEKGSGRDRT) are enriched in basic and acidic residues. The segment covering 842–855 (SSSGGSRPGSPVHH) has biased composition (low complexity). Basic and acidic residues-rich tracts occupy residues 856-872 (PSLE…KPKE), 880-890 (TKDDNFSDKNK), and 905-915 (FWRERSGEHTQ).

Belongs to the SKI family. Interacts with SMAD2 and SMAD3. As to expression, expression is restricted to adult and embryonic central nervous system. Expressed at high levels in the developing cerebellum, ventral metencephalon and myelencephalon at 12.5 dpc (at protein level). In the adult cerebellum, expressed specifically in Purkinje cells.

The protein resides in the nucleus. Its subcellular location is the cytoplasm. In terms of biological role, acts as a TGF-beta antagonist in the nervous system. Exhibits transcriptional repressor activity. The chain is SKI family transcriptional corepressor 2 from Mus musculus (Mouse).